The primary structure comprises 209 residues: Large ribosomal subunit protein uL3 (209 aa).

The disordered stretch occupies residues 121 to 154 (GGIKRHNFHRGPMAHGSKYHRRPGSSAAKGPART).

It belongs to the universal ribosomal protein uL3 family. As to quaternary structure, part of the 50S ribosomal subunit. Forms a cluster with proteins L14 and L19.

Functionally, one of the primary rRNA binding proteins, it binds directly near the 3'-end of the 23S rRNA, where it nucleates assembly of the 50S subunit. The polypeptide is Large ribosomal subunit protein uL3 (Desulforamulus reducens (strain ATCC BAA-1160 / DSM 100696 / MI-1) (Desulfotomaculum reducens)).